Consider the following 443-residue polypeptide: 26S proteasome regulatory subunit 4 homolog A (443 aa).

2 disordered regions span residues 1–55 (MGQG…LPTV) and 87–108 (RLKPQEEKAEEDRSKVDDLRGT). Composition is skewed to basic and acidic residues over residues 12–28 (QGDRKPDGGDKKEKKFE) and 87–106 (RLKPQEEKAEEDRSKVDDLR). ATP is bound at residue 229–236 (GEPGTGKT). Residues Lys296 and Lys433 each participate in a glycyl lysine isopeptide (Lys-Gly) (interchain with G-Cter in ubiquitin) cross-link.

Belongs to the AAA ATPase family. In terms of assembly, component of the 19S regulatory particle (RP/PA700) base subcomplex of the 26S proteasome. The 26S proteasome is composed of a core protease (CP), known as the 20S proteasome, capped at one or both ends by the 19S regulatory particle (RP/PA700). The RP/PA700 complex is composed of at least 17 different subunits in two subcomplexes, the base and the lid, which form the portions proximal and distal to the 20S proteolytic core, respectively. Required for innate immunity. Interacts with UNI. In terms of tissue distribution, preferentially expressed in the root and shoot apical meristem.

The protein localises to the cytoplasm. Its subcellular location is the P-body. The protein resides in the nucleus. In terms of biological role, the 26S protease is involved in the ATP-dependent degradation of ubiquitinated proteins. The regulatory (or ATPase) complex confers ATP dependency and substrate specificity to the 26S complex. Interacts with transit peptides of proteins targeted to the chloroplast, and may be involved in the degradation of unimported plastid protein precursors. Is required for the maintenance of postembryonic root and shoot meristems. Has a specific role in the regulation of organs size. Acts redundantly with RPT2B in the regulation of gametogenesis. With RPT2B plays a critical role in 26S proteasome assembly. Acts as an upstream signaling component for inducing both defense and morphological phenotypes in the constitutive active uni-1D mutant. Acts as a negative regulator of endoreduplication in trichome cells. May function after the completion of the third endoreduplication step (8C to 16C) mediated by RHL1. Acts as a negative regulator of transcriptional gene silencing (TGS) at specific endogenous genes through DNA methylation. Promotes post-transcriptional gene silencing (PTGS) by limiting the degradation of transgene aberrant RNAs by the RNA quality control (RQC) machinery, thus favoring their entry into cytoplasmic siRNA bodies where they can trigger PTGS. Involved in tolerance to zinc deficiency, possibly through alleviation of oxidative stresses or processing of poly-ubiquitinated proteins. Required for resistance to the fungal pathogen Golovinomyces cichoracearum. This Arabidopsis thaliana (Mouse-ear cress) protein is 26S proteasome regulatory subunit 4 homolog A.